We begin with the raw amino-acid sequence, 647 residues long: DNA topoisomerase 4 subunit B (647 aa).

Residues Y11, N51, D78, 118–124 (GLHGVGS), and K344 each bind ATP. The span at 391-401 (AARKARDESRN) shows a compositional bias: basic and acidic residues. Residues 391–421 (AARKARDESRNGKKNKKDKGLLSGKLTPAQS) are disordered. Residues 427–541 (NELYLVEGDS…AGHVYIALPP (115 aa)) form the Toprim domain. Residues E433, D506, and D508 each contribute to the Mg(2+) site.

It belongs to the type II topoisomerase family. ParE type 2 subfamily. As to quaternary structure, heterotetramer composed of ParC and ParE. Mg(2+) is required as a cofactor. The cofactor is Mn(2+). Ca(2+) serves as cofactor.

It catalyses the reaction ATP-dependent breakage, passage and rejoining of double-stranded DNA.. With respect to regulation, inhibited by quinolones, such as levofloxacin. Its function is as follows. Topoisomerase IV is essential for chromosome segregation. It relaxes supercoiled DNA. Performs the decatenation events required during the replication of a circular DNA molecule. In Streptococcus pneumoniae serotype 4 (strain ATCC BAA-334 / TIGR4), this protein is DNA topoisomerase 4 subunit B.